The primary structure comprises 84 residues: UPF0457 protein BC_3525 (84 aa).

It belongs to the UPF0457 family.

This chain is UPF0457 protein BC_3525, found in Bacillus cereus (strain ATCC 14579 / DSM 31 / CCUG 7414 / JCM 2152 / NBRC 15305 / NCIMB 9373 / NCTC 2599 / NRRL B-3711).